Consider the following 178-residue polypeptide: MFPVLLLLLFFFAKETHQINVDCNELQMMGQFMCPDPARGQIDPKTQQLAGCTREGRARVWCIAANEINCTETGNATFTREVPCKWTNGYHLDTTLLLSVFLGMFGVDRFYLGYPGIGLLKFCTLGGMFLGQLIDIVLIALQVVGPADGSAYVIPYYGAGIHIVRSDNTTYRLPRDDW.

Residues 1–18 (MFPVLLLLLFFFAKETHQ) form the signal peptide. Residues 19–99 (INVDCNELQM…YHLDTTLLLS (81 aa)) lie on the Extracellular side of the membrane. N-linked (GlcNAc...) asparagine glycans are attached at residues asparagine 69 and asparagine 75. Residues 94–137 (TTLLLSVFLGMFGVDRFYLGYPGIGLLKFCTLGGMFLGQLIDIV) form the TM2 domain. A helical membrane pass occupies residues 100-120 (VFLGMFGVDRFYLGYPGIGLL). The Cytoplasmic portion of the chain corresponds to 121 to 124 (KFCT). The helical transmembrane segment at 125–145 (LGGMFLGQLIDIVLIALQVVG) threads the bilayer. Residues 146–178 (PADGSAYVIPYYGAGIHIVRSDNTTYRLPRDDW) are Extracellular-facing. The N-linked (GlcNAc...) asparagine glycan is linked to asparagine 168.

The protein belongs to the TM2 family.

The protein localises to the membrane. Positive regulator of Notch signaling. Maternal neurogenic factor involved in Notch signaling-dependent neuroectodermal specification during early embryogenesis. Functions cooperatively with amx/TM2D3 and amrt/TM2D2. This is TM2 domain-containing protein biscotti from Drosophila melanogaster (Fruit fly).